A 217-amino-acid chain; its full sequence is Adenylate kinase (217 aa).

10-15 (GAGKGT) provides a ligand contact to ATP. The interval 30–59 (STGDIFRANIKNNTELGAKAKEYMDQGLLV) is NMP. Residues threonine 31, arginine 36, 57–59 (LLV), 85–88 (GFPR), and glutamine 92 each bind AMP. The tract at residues 126-163 (GRRACVSCGGTYHVVFTPTKKEGICDACGGELTIRDDD) is LID. Arginine 127 contributes to the ATP binding site. Positions 130 and 133 each coordinate Zn(2+). Residue 136–137 (TY) coordinates ATP. 2 residues coordinate Zn(2+): cysteine 150 and cysteine 153. Residues arginine 160 and arginine 171 each coordinate AMP. Lysine 199 contributes to the ATP binding site.

Belongs to the adenylate kinase family. In terms of assembly, monomer.

It localises to the cytoplasm. It carries out the reaction AMP + ATP = 2 ADP. Its pathway is purine metabolism; AMP biosynthesis via salvage pathway; AMP from ADP: step 1/1. Functionally, catalyzes the reversible transfer of the terminal phosphate group between ATP and AMP. Plays an important role in cellular energy homeostasis and in adenine nucleotide metabolism. The sequence is that of Adenylate kinase from Lachnoclostridium phytofermentans (strain ATCC 700394 / DSM 18823 / ISDg) (Clostridium phytofermentans).